The sequence spans 493 residues: Probable cytosol aminopeptidase (493 aa).

Residues lysine 262 and aspartate 267 each coordinate Mn(2+). Lysine 274 is a catalytic residue. Mn(2+) is bound by residues aspartate 286, aspartate 345, and glutamate 347. Arginine 349 is a catalytic residue.

Belongs to the peptidase M17 family. It depends on Mn(2+) as a cofactor.

Its subcellular location is the cytoplasm. It catalyses the reaction Release of an N-terminal amino acid, Xaa-|-Yaa-, in which Xaa is preferably Leu, but may be other amino acids including Pro although not Arg or Lys, and Yaa may be Pro. Amino acid amides and methyl esters are also readily hydrolyzed, but rates on arylamides are exceedingly low.. The catalysed reaction is Release of an N-terminal amino acid, preferentially leucine, but not glutamic or aspartic acids.. Presumably involved in the processing and regular turnover of intracellular proteins. Catalyzes the removal of unsubstituted N-terminal amino acids from various peptides. This chain is Probable cytosol aminopeptidase, found in Cyanothece sp. (strain PCC 7425 / ATCC 29141).